A 353-amino-acid chain; its full sequence is Ferredoxin--NADP reductase (353 aa).

Residues Asp33, Gln41, Tyr46, Val86, Phe121, Asp293, and Thr333 each coordinate FAD.

It belongs to the ferredoxin--NADP reductase type 2 family. As to quaternary structure, homodimer. It depends on FAD as a cofactor.

It catalyses the reaction 2 reduced [2Fe-2S]-[ferredoxin] + NADP(+) + H(+) = 2 oxidized [2Fe-2S]-[ferredoxin] + NADPH. In Verminephrobacter eiseniae (strain EF01-2), this protein is Ferredoxin--NADP reductase.